A 290-amino-acid chain; its full sequence is 4-diphosphocytidyl-2-C-methyl-D-erythritol kinase (290 aa).

Lys-13 is a catalytic residue. 96–106 (PMGGGIGGGSS) contributes to the ATP binding site. Residue Asp-138 is part of the active site.

This sequence belongs to the GHMP kinase family. IspE subfamily.

It catalyses the reaction 4-CDP-2-C-methyl-D-erythritol + ATP = 4-CDP-2-C-methyl-D-erythritol 2-phosphate + ADP + H(+). Its pathway is isoprenoid biosynthesis; isopentenyl diphosphate biosynthesis via DXP pathway; isopentenyl diphosphate from 1-deoxy-D-xylulose 5-phosphate: step 3/6. Catalyzes the phosphorylation of the position 2 hydroxy group of 4-diphosphocytidyl-2C-methyl-D-erythritol. This Vibrio campbellii (strain ATCC BAA-1116) protein is 4-diphosphocytidyl-2-C-methyl-D-erythritol kinase.